Here is a 376-residue protein sequence, read N- to C-terminus: Myeloid leukemia factor (376 aa).

The interaction with DREF stretch occupies residues 96–202; it reads GNSGASFCQS…DREFTSRASR (107 aa). Disordered stretches follow at residues 124 to 147, 187 to 224, and 250 to 376; these read STSTKTGPGGVRETRRTVQDSRTG, GEAEQFDREFTSRASRGAVQSRHHAGGMQAIMPARPAA, and QPVR…GKKK. Residues 262–273 show a composition bias toward polar residues; sequence SAPTAPQNSGNI. Residues 274–318 show a composition bias toward low complexity; that stretch reads ATAAAPTPTSSPTTYDTSNGNNNNYVSSRRSYLRNGHGHSLATPR. Thr-323 is subject to Phosphothreonine.

It belongs to the MLF family. Interacts with DRE-binding factor Dref. Expressed at high levels in unfertilized eggs, early embryos, pupae and adult males while a low level expression is found in adult females and larvae.

It is found in the cytoplasm. In Drosophila melanogaster (Fruit fly), this protein is Myeloid leukemia factor (Mlf).